The sequence spans 141 residues: Cystatin (141 aa).

The first 26 residues, 1 to 26, serve as a signal peptide directing secretion; that stretch reads MVHSQLPVAAPLRLLCALLLLPSATM. A Cystatin domain is found at 29–129; the sequence is GGLSPRSVTD…CHFQVWSRPW (101 aa). The Secondary area of contact signature appears at 73–77; sequence QVVAG. Cystine bridges form between C91-C107 and C120-C140.

The protein belongs to the cystatin family. In terms of tissue distribution, expressed at a low level by the venom gland (at protein level).

It is found in the secreted. Inhibits various C1 cysteine proteases including cathepsin L, papain and cathepsin B. This protein has no toxic activity and its function in the venom is unknown. It may play a role as a housekeeping or regulatory protein. The chain is Cystatin from Pseudonaja textilis (Eastern brown snake).